Reading from the N-terminus, the 126-residue chain is Large ribosomal subunit protein uL29 (126 aa).

This sequence belongs to the universal ribosomal protein uL29 family.

This is Large ribosomal subunit protein uL29 (rpl35) from Dictyostelium discoideum (Social amoeba).